The sequence spans 324 residues: D-alanine--D-alanine ligase (324 aa).

An ATP-grasp domain is found at 121–321 (NQYLKAFGVR…IKDVMTDIIE (201 aa)). ATP is bound at residue 149–204 (VEKIGLPCFIKPNLGGSSFGVTKVKTREQIQPAIAKAFSEAEEVMIEAFMGGTELT). Positions 275, 288, and 290 each coordinate Mg(2+).

It belongs to the D-alanine--D-alanine ligase family. It depends on Mg(2+) as a cofactor. Mn(2+) is required as a cofactor.

The protein localises to the cytoplasm. The catalysed reaction is 2 D-alanine + ATP = D-alanyl-D-alanine + ADP + phosphate + H(+). The protein operates within cell wall biogenesis; peptidoglycan biosynthesis. In terms of biological role, cell wall formation. The sequence is that of D-alanine--D-alanine ligase from Bacteroides fragilis (strain ATCC 25285 / DSM 2151 / CCUG 4856 / JCM 11019 / LMG 10263 / NCTC 9343 / Onslow / VPI 2553 / EN-2).